We begin with the raw amino-acid sequence, 273 residues long: Nitrogenase iron protein (273 aa).

ATP is bound at residue 8 to 15; the sequence is GKGGIGKS. Cys95 provides a ligand contact to [4Fe-4S] cluster. Arg98 carries the post-translational modification ADP-ribosylarginine; by dinitrogenase reductase ADP-ribosyltransferase. Cys130 is a binding site for [4Fe-4S] cluster.

This sequence belongs to the NifH/BchL/ChlL family. Homodimer. The cofactor is [4Fe-4S] cluster. In terms of processing, the reversible ADP-ribosylation of Arg-98 inactivates the nitrogenase reductase and regulates nitrogenase activity.

It catalyses the reaction N2 + 8 reduced [2Fe-2S]-[ferredoxin] + 16 ATP + 16 H2O = H2 + 8 oxidized [2Fe-2S]-[ferredoxin] + 2 NH4(+) + 16 ADP + 16 phosphate + 6 H(+). In terms of biological role, the key enzymatic reactions in nitrogen fixation are catalyzed by the nitrogenase complex, which has 2 components: the iron protein and the molybdenum-iron protein. The polypeptide is Nitrogenase iron protein (Methanosarcina mazei (strain ATCC BAA-159 / DSM 3647 / Goe1 / Go1 / JCM 11833 / OCM 88) (Methanosarcina frisia)).